A 344-amino-acid polypeptide reads, in one-letter code: L-rhamnose-proton symporter (344 aa).

10 helical membrane-spanning segments follow: residues 4-24, 38-58, 68-88, 101-121, 137-157, 175-195, 214-234, 255-275, 290-310, and 324-344; these read PILL…CFYA, WSLG…WWLL, FDMA…IGNI, MGIG…TPVL, TLLG…AGLL, LILA…MDAA, LPSY…FCFI, LIAN…QFFF, ISWM…GLLF, and LVLG…GMAV.

The protein belongs to the L-rhamnose transporter (TC 2.A.7.6) family.

The protein localises to the cell inner membrane. The enzyme catalyses L-rhamnopyranose(in) + H(+)(in) = L-rhamnopyranose(out) + H(+)(out). Its function is as follows. Uptake of L-rhamnose across the cytoplasmic membrane with the concomitant transport of protons into the cell (symport system). This Pectobacterium atrosepticum (strain SCRI 1043 / ATCC BAA-672) (Erwinia carotovora subsp. atroseptica) protein is L-rhamnose-proton symporter.